Here is a 189-residue protein sequence, read N- to C-terminus: Large ribosomal subunit protein uL6 (189 aa).

Belongs to the universal ribosomal protein uL6 family. Part of the 50S ribosomal subunit.

Functionally, this protein binds to the 23S rRNA, and is important in its secondary structure. It is located near the subunit interface in the base of the L7/L12 stalk, and near the tRNA binding site of the peptidyltransferase center. This chain is Large ribosomal subunit protein uL6, found in Bacteroides fragilis (strain ATCC 25285 / DSM 2151 / CCUG 4856 / JCM 11019 / LMG 10263 / NCTC 9343 / Onslow / VPI 2553 / EN-2).